Consider the following 235-residue polypeptide: Phosphoribosylaminoimidazole-succinocarboxamide synthase (235 aa).

It belongs to the SAICAR synthetase family.

It catalyses the reaction 5-amino-1-(5-phospho-D-ribosyl)imidazole-4-carboxylate + L-aspartate + ATP = (2S)-2-[5-amino-1-(5-phospho-beta-D-ribosyl)imidazole-4-carboxamido]succinate + ADP + phosphate + 2 H(+). The protein operates within purine metabolism; IMP biosynthesis via de novo pathway; 5-amino-1-(5-phospho-D-ribosyl)imidazole-4-carboxamide from 5-amino-1-(5-phospho-D-ribosyl)imidazole-4-carboxylate: step 1/2. The polypeptide is Phosphoribosylaminoimidazole-succinocarboxamide synthase (Chlorobaculum parvum (strain DSM 263 / NCIMB 8327) (Chlorobium vibrioforme subsp. thiosulfatophilum)).